Here is a 234-residue protein sequence, read N- to C-terminus: Fibrillarin-like rRNA/tRNA 2'-O-methyltransferase (234 aa).

Residues Thr-91–Thr-92, Glu-110–Phe-111, Asp-137–Ala-138, and Asp-157–Gln-160 contribute to the S-adenosyl-L-methionine site.

Belongs to the methyltransferase superfamily. Fibrillarin family. In terms of assembly, interacts with nop5. Component of box C/D small ribonucleoprotein (sRNP) particles that contain rpl7ae, FlpA and nop5, plus a guide RNA.

Its function is as follows. Involved in pre-rRNA and tRNA processing. Utilizes the methyl donor S-adenosyl-L-methionine to catalyze the site-specific 2'-hydroxyl methylation of ribose moieties in rRNA and tRNA. Site specificity is provided by a guide RNA that base pairs with the substrate. Methylation occurs at a characteristic distance from the sequence involved in base pairing with the guide RNA. The sequence is that of Fibrillarin-like rRNA/tRNA 2'-O-methyltransferase from Pyrobaculum calidifontis (strain DSM 21063 / JCM 11548 / VA1).